The primary structure comprises 454 residues: Asparagine--tRNA ligase (454 aa).

Belongs to the class-II aminoacyl-tRNA synthetase family. Homodimer.

The protein localises to the cytoplasm. It catalyses the reaction tRNA(Asn) + L-asparagine + ATP = L-asparaginyl-tRNA(Asn) + AMP + diphosphate + H(+). This is Asparagine--tRNA ligase from Mesoplasma florum (strain ATCC 33453 / NBRC 100688 / NCTC 11704 / L1) (Acholeplasma florum).